Reading from the N-terminus, the 340-residue chain is UDP-3-O-(3-hydroxymyristoyl)glucosamine N-acyltransferase (340 aa).

Residue His-239 is the Proton acceptor of the active site.

This sequence belongs to the transferase hexapeptide repeat family. LpxD subfamily. In terms of assembly, homotrimer.

It carries out the reaction a UDP-3-O-[(3R)-3-hydroxyacyl]-alpha-D-glucosamine + a (3R)-hydroxyacyl-[ACP] = a UDP-2-N,3-O-bis[(3R)-3-hydroxyacyl]-alpha-D-glucosamine + holo-[ACP] + H(+). It catalyses the reaction UDP-3-O-[(3R)-3-hydroxytetradecanoyl]-alpha-D-glucosamine + (3R)-hydroxytetradecanoyl-[ACP] = UDP-2-N,3-O-bis[(3R)-3-hydroxytetradecanoyl]-alpha-D-glucosamine + holo-[ACP] + H(+). It functions in the pathway glycolipid biosynthesis; lipid IV(A) biosynthesis; lipid IV(A) from (3R)-3-hydroxytetradecanoyl-[acyl-carrier-protein] and UDP-N-acetyl-alpha-D-glucosamine: step 3/6. Its function is as follows. Catalyzes the N-acylation of UDP-3-O-(hydroxytetradecanoyl)glucosamine using 3-hydroxytetradecanoyl-ACP as the acyl donor. Is involved in the biosynthesis of lipid A, a phosphorylated glycolipid that anchors the lipopolysaccharide to the outer membrane of the cell. This Wigglesworthia glossinidia brevipalpis protein is UDP-3-O-(3-hydroxymyristoyl)glucosamine N-acyltransferase.